Reading from the N-terminus, the 775-residue chain is Suppressor of glycerol defect protein 1 (775 aa).

2 stretches are compositionally biased toward basic residues: residues 1–11 and 28–49; these read MRPIKKSRSLK and RRGKRNHNLPHREKRKFARISR. 2 disordered regions span residues 1–101 and 152–253; these read MRPI…LLDP and IDDI…GGDK. 3 stretches are compositionally biased toward basic and acidic residues: residues 52–79, 177–193, and 209–223; these read NGYENRKITEEGDSKSSELNDDYLDAHR, TGDHGSVDELESEREGN, and DEFHQPETKPIRMDP. The MIF4G domain occupies 262–463; it reads RRKLQGSLNK…ESITNLKENK (202 aa). An MI domain is found at 565–689; that stretch reads TLRTSIFVAL…PLTILKHVDF (125 aa).

The protein belongs to the CWC22 family.

The protein localises to the nucleus. The protein resides in the nucleolus. Its function is as follows. Involved in osmoregulatory glycerol response. In Schizosaccharomyces pombe (strain 972 / ATCC 24843) (Fission yeast), this protein is Suppressor of glycerol defect protein 1 (sgd1).